Consider the following 554-residue polypeptide: MVFLNNCDFYFVLDFYFSHTFLSSLRVYKISMSFITGIEKDITNFFSGASDTFSGVVNFGSNIVNGVQNAVQGVVHSIANIAQGIYNGILSIGSDIVNIFGQIGGAIWHGLVSFATAFGTFFYEAFHIVSSAVYGAFQRVASAFEYVGKWIWGGITHIGDALSAFGNWLYNGFREIGIDLLNLGVTASFIYADIKSFFITIWNGLVVIGEDIANAFKAFASSVESLFNTASSYASNLLNDVMYIPEDASKYVASKVSSVLPRVASYNLFFEEMKSLDRLSETMGWRKTIAPILLKIGSPFIAGFTSLIAETALKSFFPEVTGVSPRARRTVAPPPSSDVVSSLSVPNPFQNSISQFTPPTVSPPPQSSVSLSPSPTFEKYVVGAREEDEELLVELPTVLNKLASPYPNSAIVLDEFTVGGYIVQTTREFISFSSVNNVYVIPYATLKIRKVSEESSATVDFTGGVLVETYLLGIPICPASANNASTSSISGAINDGVNSSVQVCLEIGNVASDSGNFSATAYQGVVAPVIPAISQSSSDNQNVSLSVYQSTSMP.

This is an uncharacterized protein from Acidianus sp. F28 (AFV-2).